A 122-amino-acid chain; its full sequence is Large ribosomal subunit protein uL14c (122 aa).

Belongs to the universal ribosomal protein uL14 family. In terms of assembly, part of the 50S ribosomal subunit.

The protein resides in the plastid. Its subcellular location is the chloroplast. Functionally, binds to 23S rRNA. The sequence is that of Large ribosomal subunit protein uL14c from Oenothera biennis (German evening primrose).